The following is a 370-amino-acid chain: DNA replication and repair protein RecF (370 aa).

30-37 (GENAQGKT) provides a ligand contact to ATP.

Belongs to the RecF family.

The protein localises to the cytoplasm. Its function is as follows. The RecF protein is involved in DNA metabolism; it is required for DNA replication and normal SOS inducibility. RecF binds preferentially to single-stranded, linear DNA. It also seems to bind ATP. In Listeria monocytogenes serotype 4b (strain CLIP80459), this protein is DNA replication and repair protein RecF.